The chain runs to 248 residues: Cytochrome c oxidase subunit 2 (248 aa).

Topologically, residues 1 to 36 (MLFFNSILNDAPSSWALYFQDGASPSYLGVTHLNDY) are mitochondrial intermembrane. A helical transmembrane segment spans residues 37–57 (LMFYLTFIFIGVIYAICKAVI). Residues 58–75 (EYNYNSHPIAAKYTTHGS) lie on the Mitochondrial matrix side of the membrane. The chain crosses the membrane as a helical span at residues 76–100 (IVEFIWTLIPALILILVALPSFKLL). At 101–248 (YLLDEVQKPS…DFLAWLEENS (148 aa)) the chain is on the mitochondrial intermembrane side. Cu cation-binding residues include H182, C217, E219, C221, H225, and M228. Residue E219 participates in Mg(2+) binding.

Belongs to the cytochrome c oxidase subunit 2 family. Component of the cytochrome c oxidase (complex IV, CIV), a multisubunit enzyme composed of a catalytic core of 3 subunits and several supernumerary subunits. The complex exists as a monomer or a dimer and forms supercomplexes (SCs) in the inner mitochondrial membrane with ubiquinol-cytochrome c oxidoreductase (cytochrome b-c1 complex, complex III, CIII). Requires Cu cation as cofactor.

The protein resides in the mitochondrion inner membrane. It catalyses the reaction 4 Fe(II)-[cytochrome c] + O2 + 8 H(+)(in) = 4 Fe(III)-[cytochrome c] + 2 H2O + 4 H(+)(out). Its function is as follows. Component of the cytochrome c oxidase, the last enzyme in the mitochondrial electron transport chain which drives oxidative phosphorylation. The respiratory chain contains 3 multisubunit complexes succinate dehydrogenase (complex II, CII), ubiquinol-cytochrome c oxidoreductase (cytochrome b-c1 complex, complex III, CIII) and cytochrome c oxidase (complex IV, CIV), that cooperate to transfer electrons derived from NADH and succinate to molecular oxygen, creating an electrochemical gradient over the inner membrane that drives transmembrane transport and the ATP synthase. Cytochrome c oxidase is the component of the respiratory chain that catalyzes the reduction of oxygen to water. Electrons originating from reduced cytochrome c in the intermembrane space (IMS) are transferred via the dinuclear copper A center (CU(A)) of subunit 2 and heme A of subunit 1 to the active site in subunit 1, a binuclear center (BNC) formed by heme A3 and copper B (CU(B)). The BNC reduces molecular oxygen to 2 water molecules using 4 electrons from cytochrome c in the IMS and 4 protons from the mitochondrial matrix. The polypeptide is Cytochrome c oxidase subunit 2 (cox2) (Schizosaccharomyces pombe (strain 972 / ATCC 24843) (Fission yeast)).